We begin with the raw amino-acid sequence, 526 residues long: MSQNNIHEHRILILDFGSQYTQLIARRIREIGVYCEVEPWDIDVEDIVKFGARGIILSGGPETVTGDNAPVAPVEVFELGVPVLGICYGMQTMAEQLGGKVINATEHEYGYAQVRAHGHTKLLNDIEDHVTPEGYGMLDVWMSHGDRVDKMPEGFKLMASTGNCPIAGMANEEKDFYGIQFHPEVTHTTQGQRMIERFVVDLCGCEKLWTTENIIDDSIARIRQQVGSDEVLLGLSGGVDSSVVAALLHKAIGDQLTCVFVDHGLLRHQEGDQVMSMFAENMGIKVIRVDAEDYFMNALAGEADPEKKRKIIGHAFIEMFDQESAKLTGVKWLAQGTIYPDVIESAGSKTGKAKVIKSHHNVGGLPEDMKLELLEPLRELFKDEVRRLGVALGLPSDMVYRHPFPGPGLGVRILGEVKKEYADILRLADHIFIEELRAADLYDKTSQAFTVFLPVKSVGVVGDARRYDYVVSLRAVETIDFMTARWAHLPYDFLEKVSNRIINEIPRITRVTYDISSKPPATIEWE.

Residues 10 to 208 (RILILDFGSQ…VVDLCGCEKL (199 aa)) enclose the Glutamine amidotransferase type-1 domain. Cys-87 serves as the catalytic Nucleophile. Residues His-182 and Glu-184 contribute to the active site. The GMPS ATP-PPase domain occupies 209–401 (WTTENIIDDS…LGLPSDMVYR (193 aa)). 236–242 (SGGVDSS) serves as a coordination point for ATP.

In terms of assembly, homodimer.

It catalyses the reaction XMP + L-glutamine + ATP + H2O = GMP + L-glutamate + AMP + diphosphate + 2 H(+). It functions in the pathway purine metabolism; GMP biosynthesis; GMP from XMP (L-Gln route): step 1/1. Its function is as follows. Catalyzes the synthesis of GMP from XMP. This is GMP synthase [glutamine-hydrolyzing] from Hydrogenovibrio crunogenus (strain DSM 25203 / XCL-2) (Thiomicrospira crunogena).